Reading from the N-terminus, the 306-residue chain is Ribosomal protein L11 methyltransferase (306 aa).

4 residues coordinate S-adenosyl-L-methionine: Thr154, Gly179, Asp201, and Asn242.

Belongs to the methyltransferase superfamily. PrmA family.

It is found in the cytoplasm. The catalysed reaction is L-lysyl-[protein] + 3 S-adenosyl-L-methionine = N(6),N(6),N(6)-trimethyl-L-lysyl-[protein] + 3 S-adenosyl-L-homocysteine + 3 H(+). Functionally, methylates ribosomal protein L11. In Xylella fastidiosa (strain Temecula1 / ATCC 700964), this protein is Ribosomal protein L11 methyltransferase.